A 571-amino-acid chain; its full sequence is External alternative NAD(P)H-ubiquinone oxidoreductase B1, mitochondrial (571 aa).

The transit peptide at 1–35 (MTLLSSLGRASRSAPLASKLLLLGTLSGGSIVAYA) directs the protein to the mitochondrion. 51–81 (KVVVLGTGWAGISFLKDLDITSYDVQVVSPQ) contributes to the FAD binding site. 215-251 (LHFVIVGGGPTGVEFAAELHDFIIEDITKIYPSVKEL) contributes to the NAD(+) binding site. Positions 372 to 407 (KILGDIANIFKAADADNSGTLTMEELEGVVDDIIVR) constitute an EF-hand domain. The Ca(2+) site is built by aspartate 385, aspartate 387, serine 389, threonine 391, and glutamate 396. The short motif at 562 to 571 (YIFGRDSSRI) is the Microbody targeting signal element.

The protein belongs to the NADH dehydrogenase family. Requires FAD as cofactor. Expressed in seedlings, roots, cotyledons, leaves, stems, buds and flowers.

The protein localises to the mitochondrion inner membrane. It is found in the peroxisome. The enzyme catalyses a quinone + NADH + H(+) = a quinol + NAD(+). The catalysed reaction is a ubiquinone + NADH + H(+) = a ubiquinol + NAD(+). Activity is calcium-dependent with a more pronounced effect at higher pH. In terms of biological role, alternative NADH-ubiquinone oxidoreductase which catalyzes the oxidation of mitochondrial NADH does not translocate protons across the inner mitochondrial membrane. Calcium-dependent NAD(P)H dehydrogenase. Binds calcium ions. The protein is External alternative NAD(P)H-ubiquinone oxidoreductase B1, mitochondrial (NDB1) of Arabidopsis thaliana (Mouse-ear cress).